We begin with the raw amino-acid sequence, 105 residues long: Plastocyanin (105 aa).

One can recognise a Plastocyanin-like domain in the interval 1–105 (ETYTVKLGSD…GMVGKITVAG (105 aa)). 4 residues coordinate Cu(2+): His-39, Cys-89, His-92, and Met-97.

The protein belongs to the plastocyanin family. It depends on Cu(2+) as a cofactor.

The protein resides in the cellular thylakoid membrane. Functionally, participates in electron transfer between P700 and the cytochrome b6-f complex in photosystem I. This Anabaena variabilis protein is Plastocyanin (petE).